Consider the following 221-residue polypeptide: Flagellar L-ring protein 2 (221 aa).

An N-terminal signal peptide occupies residues 1-16 (MKRFLILTPMVLALCG). A lipid anchor (N-palmitoyl cysteine) is attached at Cys-17. Residue Cys-17 is the site of S-diacylglycerol cysteine attachment.

The protein belongs to the FlgH family. The basal body constitutes a major portion of the flagellar organelle and consists of four rings (L,P,S, and M) mounted on a central rod.

It localises to the cell outer membrane. The protein resides in the bacterial flagellum basal body. Assembles around the rod to form the L-ring and probably protects the motor/basal body from shearing forces during rotation. This is Flagellar L-ring protein 2 from Yersinia pseudotuberculosis serotype I (strain IP32953).